Here is a 741-residue protein sequence, read N- to C-terminus: Alpha-1,6-mannosylglycoprotein 6-beta-N-acetylglucosaminyltransferase A (741 aa).

Over 1–13 the chain is Cytoplasmic; sequence MALFTPWKLSSQK. The chain crosses the membrane as a helical; Signal-anchor for type II membrane protein span at residues 14 to 30; sequence LGFFLVTFGFIWGMMLL. Residues 31–741 lie on the Lumenal side of the membrane; the sequence is HFTIQQRTQP…GQVALCKDCL (711 aa). 3 N-linked (GlcNAc...) asparagine glycosylation sites follow: N110, N115, and N118. Intrachain disulfides connect C145–C183, C156–C196, C172–C338, C372–C626, C649–C724, C653–C726, C660–C713, C681–C702, and C737–C740. The segment at 213 to 741 is sufficient for catalytic activity; that stretch reads NSLAEIRTDF…GQVALCKDCL (529 aa). An important for activity in FGF2 release region spans residues 264–269; it reads KRKRKK. Residue N334 is glycosylated (N-linked (GlcNAc...) asparagine). 378 to 379 contacts substrate; sequence DS. N-linked (GlcNAc...) asparagine glycosylation is found at N433 and N447. E526 contributes to the UDP-N-acetyl-alpha-D-glucosamine binding site. K554 contributes to the substrate binding site.

The protein belongs to the glycosyltransferase 18 family. In terms of processing, N-glycosylated. A secreted form is released from the membrane after cleavage by gamma-secretase.

It is found in the golgi apparatus membrane. Its subcellular location is the secreted. It carries out the reaction N(4)-{beta-D-GlcNAc-(1-&gt;2)-[beta-D-GlcNAc-(1-&gt;4)]-alpha-D-Man-(1-&gt;3)-[beta-D-GlcNAc-(1-&gt;2)-alpha-D-Man-(1-&gt;6)]-beta-D-Man-(1-&gt;4)-beta-D-GlcNAc-(1-&gt;4)-beta-D-GlcNAc}-L-asparaginyl-[protein] + UDP-N-acetyl-alpha-D-glucosamine = N(4)-{beta-D-GlcNAc-(1-&gt;2)-[beta-D-GlcNAc-(1-&gt;4)]-alpha-D-Man-(1-&gt;3)-[beta-D-GlcNAc-(1-&gt;2)-[beta-D-GlcNAc-(1-&gt;6)]-alpha-D-Man-(1-&gt;6)]-beta-D-Man-(1-&gt;4)-beta-D-GlcNAc-(1-&gt;4)-beta-D-GlcNAc}-L-asparaginyl-[protein] + UDP + H(+). It functions in the pathway protein modification; protein glycosylation. With respect to regulation, activity is increased by Mn(2+) and Mg(2+). Catalyzes the addition of N-acetylglucosamine (GlcNAc) in beta 1-6 linkage to the alpha-linked mannose of biantennary N-linked oligosaccharides. Catalyzes an important step in the biosynthesis of branched, complex-type N-glycans, such as those found on EGFR, TGFR (TGF-beta receptor) and CDH2. Via its role in the biosynthesis of complex N-glycans, plays an important role in the activation of cellular signaling pathways, reorganization of the actin cytoskeleton, cell-cell adhesion and cell migration. MGAT5-dependent EGFR N-glycosylation enhances the interaction between EGFR and LGALS3 and thereby prevents rapid EGFR endocytosis and prolongs EGFR signaling. Required for efficient interaction between TGFB1 and its receptor. Enhances activation of intracellular signaling pathways by several types of growth factors, including FGF2, PDGF, IGF, TGFB1 and EGF. MGAT5-dependent CDH2 N-glycosylation inhibits CDH2-mediated homotypic cell-cell adhesion and contributes to the regulation of downstream signaling pathways. Promotes cell migration. Contributes to the regulation of the inflammatory response. MGAT5-dependent TCR N-glycosylation enhances the interaction between TCR and LGALS3, limits agonist-induced TCR clustering, and thereby dampens TCR-mediated responses to antigens. Required for normal leukocyte evasation and accumulation at sites of inflammation. Inhibits attachment of monocytes to the vascular endothelium and subsequent monocyte diapedesis. In terms of biological role, promotes proliferation of umbilical vein endothelial cells and angiogenesis, at least in part by promoting the release of the growth factor FGF2 from the extracellular matrix. This Homo sapiens (Human) protein is Alpha-1,6-mannosylglycoprotein 6-beta-N-acetylglucosaminyltransferase A (MGAT5).